A 514-amino-acid chain; its full sequence is RNA-splicing ligase RtcB homolog (514 aa).

5 residues coordinate Mn(2+): Asp128, Cys131, His236, His268, and His362. Residue 235–239 (NHYAE) coordinates GMP. GMP-binding positions include 362-363 (HN), 411-414 (GGTM), Ser418, 437-440 (HGAG), and Lys513. His437 (GMP-histidine intermediate) is an active-site residue.

Belongs to the RtcB family. As to quaternary structure, catalytic component of the tRNA-splicing ligase complex. It depends on Mn(2+) as a cofactor.

It carries out the reaction a 3'-end 3'-phospho-ribonucleotide-RNA + a 5'-end dephospho-ribonucleoside-RNA + GTP = a ribonucleotidyl-ribonucleotide-RNA + GMP + diphosphate. The catalysed reaction is a 3'-end 2',3'-cyclophospho-ribonucleotide-RNA + a 5'-end dephospho-ribonucleoside-RNA + GTP + H2O = a ribonucleotidyl-ribonucleotide-RNA + GMP + diphosphate + H(+). In terms of biological role, catalytic subunit of the tRNA-splicing ligase complex that acts by directly joining spliced tRNA halves to mature-sized tRNAs by incorporating the precursor-derived splice junction phosphate into the mature tRNA as a canonical 3',5'-phosphodiester. May act as an RNA ligase with broad substrate specificity, and may function toward other RNAs. The protein is RNA-splicing ligase RtcB homolog of Ostreococcus lucimarinus (strain CCE9901).